The primary structure comprises 221 residues: MIVVLAESALELVPRELWNHPVIQADAKRRGKKPGEILLDRARHHLAMSSLRDASKRGRPDIVHQVLLVFQYSLLNKRGLGRIYIHTQGDYTIYVRWETRIPKNYNNFVSLMEQLYATGRVPPKGEPLIELYKKDLSTLLRELGGRWVVLHESGVKKPFIELGAALLNSVVVIGGFPHGDFTNKWVLEKADAIYKIGDETMDAAQVVYRAITAAEVAAGLL.

S-adenosyl-L-methionine is bound by residues glycine 174, glycine 179, and isoleucine 196 to methionine 201.

It belongs to the class IV-like SAM-binding methyltransferase superfamily. RNA methyltransferase NEP1 family. In terms of assembly, homodimer.

It carries out the reaction a pseudouridine in rRNA + S-adenosyl-L-methionine = an N(1)-methylpseudouridine in rRNA + S-adenosyl-L-homocysteine + H(+). Its function is as follows. Methyltransferase involved in ribosomal biogenesis. Specifically catalyzes the N1-methylation of the pseudouridine corresponding to position 914 in M.jannaschii 16S rRNA. This chain is Ribosomal RNA small subunit methyltransferase Nep1, found in Pyrobaculum islandicum (strain DSM 4184 / JCM 9189 / GEO3).